A 293-amino-acid polypeptide reads, in one-letter code: Probable 2-(5''-triphosphoribosyl)-3'-dephosphocoenzyme-A synthase (293 aa).

This sequence belongs to the CitG/MdcB family.

The catalysed reaction is 3'-dephospho-CoA + ATP = 2'-(5''-triphospho-alpha-D-ribosyl)-3'-dephospho-CoA + adenine. Its function is as follows. Involved in the formation of 2-(5''-phosphoribosyl)-3'-dephosphocoenzyme-A, the prosthetic group of the acyl-carrier protein of the malonate decarboxylase. The sequence is that of Probable 2-(5''-triphosphoribosyl)-3'-dephosphocoenzyme-A synthase from Pseudomonas aeruginosa (strain ATCC 15692 / DSM 22644 / CIP 104116 / JCM 14847 / LMG 12228 / 1C / PRS 101 / PAO1).